The primary structure comprises 452 residues: MSTTTIASNAVNGNHYEQLHQGRTKMYKSKVDVVLGAQWGDEGKGKVVDMLASEVDIVCRCQGGNNAGHTVVANGTEFDFHLLPSGVVNEKCISVIGNGVVIHLPSLFDEVLKNEAKGLIHLENRLIISDRAHLVFDFHQHVDGMQEAEKGGKSLGTTKKGIGPAYSSKATRNGIRVGELLGEFNLFSEKFKSIVNTHLRLFPSIKVDIDAELVRYKDYAEKIRPYVKDTICFLHTALRNGKTILVEGANAAMLDIDFGTYPYVTSSNCSIGGVLTGLGLPPQTIGEVIGVVKAYTTRVGDGPFPTEQLNEIGDLLQTRGFEVGVTTKRKRRCGWLDIPLLQYTSLVNGYTCICITKLDILDTLAEIKVGVSYRRSNGDKLDHFPGTISELGGIEVEYAILPGWQTSTEHVRNFKELPENAQSYVRFLESHLSVPVRWVGVGKGRESIINVH.

Residues 40–46 and 68–70 each bind GTP; these read GDEGKGK and GHT. Catalysis depends on Asp41, which acts as the Proton acceptor. 2 residues coordinate Mg(2+): Asp41 and Gly68. IMP-binding positions include 41 to 44, 66 to 69, Thr158, Arg172, Asn250, Thr265, and Arg329; these read DEGK and NAGH. Catalysis depends on His69, which acts as the Proton donor. Residue 325 to 331 participates in substrate binding; the sequence is VTTKRKR. Residues Arg331, 357–359, and 440–442 contribute to the GTP site; these read KLD and GVG.

Belongs to the adenylosuccinate synthetase family. Homodimer. The cofactor is Mg(2+).

Its subcellular location is the cytoplasm. The catalysed reaction is IMP + L-aspartate + GTP = N(6)-(1,2-dicarboxyethyl)-AMP + GDP + phosphate + 2 H(+). It functions in the pathway purine metabolism; AMP biosynthesis via de novo pathway; AMP from IMP: step 1/2. Its function is as follows. Plays an important role in the de novo pathway and in the salvage pathway of purine nucleotide biosynthesis. Catalyzes the first committed step in the biosynthesis of AMP from IMP. This is Adenylosuccinate synthetase from Drosophila grimshawi (Hawaiian fruit fly).